We begin with the raw amino-acid sequence, 669 residues long: Myb-like protein M (669 aa).

The interval 27–69 (DPSLMDDEFSDNEYDLSPKDDVPSPSKRGRGQIQNGIRRSPNK) is disordered. Positions 30–40 (LMDDEFSDNEY) are enriched in acidic residues. 2 HTH myb-type domains span residues 60-118 (QNGI…SPDI) and 119-170 (RKGP…SREV). DNA-binding regions (H-T-H motif) lie at residues 90 to 114 (WKRI…KRVL) and 142 to 166 (WKKI…KSLQ). Positions 172-223 (WVPKEDEVLVKKVDEMGENLSWLEVSEYLAKLKHTNTLRTALECKTRYLQLT) constitute a Myb-like domain. 2 disordered regions span residues 226 to 530 (GGSI…EDNG) and 550 to 636 (IKNK…PHQS). Low complexity-rich tracts occupy residues 234-382 (NQSN…SSPS), 389-415 (NNNN…NSNN), and 450-464 (PTSL…SSPS). The segment covering 465-482 (CNNSIRQPSPSPSIKTFK) has biased composition (polar residues). 3 stretches are compositionally biased toward low complexity: residues 483 to 521 (STIV…NNDN), 555 to 593 (NNNN…NSDN), and 611 to 636 (SNFK…PHQS).

Its subcellular location is the nucleus. The polypeptide is Myb-like protein M (mybM) (Dictyostelium discoideum (Social amoeba)).